The sequence spans 343 residues: Pseudaminic acid synthase (343 aa).

An AFP-like domain is found at 287 to 343 (SLYASKDIKKGEIFSEENVKSVRPSFGLHPKFYQELLGKKASKDIEFGDALKESDFR).

This sequence belongs to the pseudaminic acid synthase family. Requires a divalent metal cation as cofactor.

The catalysed reaction is 2,4-diacetamido-2,4,6-trideoxy-beta-L-altrose + phosphoenolpyruvate + H2O = pseudaminate + phosphate. Catalyzes the fifth step in the biosynthesis of pseudaminic acid, a sialic-acid-like sugar that is used to modify flagellin. Catalyzes the condensation of phosphoenolpyruvate with 2,4-diacetamido-2,4,6-trideoxy-beta-l-altropyranose, forming pseudaminic acid. The chain is Pseudaminic acid synthase (pseI) from Campylobacter jejuni subsp. jejuni serotype O:23/36 (strain 81-176).